Reading from the N-terminus, the 357-residue chain is Probable GTP 3',8-cyclase (357 aa).

The region spanning 5–234 (DFGRDVSGVR…DRRRYWVSSR (230 aa)) is the Radical SAM core domain. R14 contacts GTP. The [4Fe-4S] cluster site is built by C21 and C25. Residue Y27 coordinates S-adenosyl-L-methionine. Residue C28 participates in [4Fe-4S] cluster binding. K68 is a binding site for GTP. G72 provides a ligand contact to S-adenosyl-L-methionine. Residue T96 coordinates GTP. S120 provides a ligand contact to S-adenosyl-L-methionine. A GTP-binding site is contributed by K157. Residues 232 to 256 (SSRDAGSTADDAAQSVTPDGGAHPD) form a disordered region. Residues C272 and C275 each coordinate [4Fe-4S] cluster. 277–279 (RVR) is a GTP binding site. C289 provides a ligand contact to [4Fe-4S] cluster.

It belongs to the radical SAM superfamily. MoaA family. Requires [4Fe-4S] cluster as cofactor.

The catalysed reaction is GTP + AH2 + S-adenosyl-L-methionine = (8S)-3',8-cyclo-7,8-dihydroguanosine 5'-triphosphate + 5'-deoxyadenosine + L-methionine + A + H(+). Its pathway is cofactor biosynthesis; molybdopterin biosynthesis. Functionally, catalyzes the cyclization of GTP to (8S)-3',8-cyclo-7,8-dihydroguanosine 5'-triphosphate. This Halobacterium salinarum (strain ATCC 29341 / DSM 671 / R1) protein is Probable GTP 3',8-cyclase.